Consider the following 265-residue polypeptide: S-acyl fatty acid synthase thioesterase, medium chain (265 aa).

Met1 carries the post-translational modification N-acetylmethionine. Active-site residues include Ser101 and His237.

Belongs to the thioesterase family. In terms of assembly, interacts (via C-terminus) with FASN. As to expression, detected both in lactating and non-lactating breast epithelium (at protein level). Isoform 2 is up-regulated in bone marrow-derived mononuclear cells of rheumatoid arthritis patients.

The protein resides in the cytoplasm. It is found in the cytosol. It carries out the reaction (9Z)-octadecenoyl-[ACP] + H2O = (9Z)-octadecenoate + holo-[ACP] + H(+). The catalysed reaction is decanoyl-CoA + H2O = decanoate + CoA + H(+). It catalyses the reaction dodecanoyl-CoA + H2O = dodecanoate + CoA + H(+). The enzyme catalyses tetradecanoyl-CoA + H2O = tetradecanoate + CoA + H(+). It carries out the reaction hexadecanoyl-CoA + H2O = hexadecanoate + CoA + H(+). Contributes to the release of free fatty acids from fatty acid synthase (FASN). Has broad substrate specificity, giving rise to a range of free fatty acids with chain lengths between 10 and 16 carbon atoms (C10 - C16). The protein is S-acyl fatty acid synthase thioesterase, medium chain of Homo sapiens (Human).